Here is a 661-residue protein sequence, read N- to C-terminus: Lateral signaling target protein 2 (661 aa).

Residues 294–432 are disordered; it reads VPEDTSSTLT…SDDEITDDVQ (139 aa). A compositionally biased stretch (polar residues) spans 297–310; it reads DTSSTLTMSDFRTN. 2 stretches are compositionally biased toward low complexity: residues 330 to 360 and 381 to 393; these read SDSTSSLDSSVQDSSSETTSLASSALASPHS and TNSNSSNEVTESP. A compositionally biased stretch (acidic residues) spans 394 to 411; that stretch reads ETIEEPDNVDMEESSESE. The segment covering 412-422 has biased composition (basic and acidic residues); the sequence is VDTHIDETRNE. The segment at 566 to 626 adopts an FYVE-type zinc-finger fold; sequence DEDCEQCTAC…VCNLCYVHRL (61 aa). Positions 572, 575, 588, 591, 596, 599, 618, and 621 each coordinate Zn(2+). Residues 641–650 show a composition bias toward polar residues; the sequence is NGATVPSVTE. Positions 641–661 are disordered; it reads NGATVPSVTEQQSAQTASASS. Over residues 651–661 the composition is skewed to low complexity; sequence QQSAQTASASS.

Belongs to the lst-2 family. Expressed in vulval precursor cells (VPCs).

Functionally, negative regulator of epidermal growth factor receptor (EGFR) signaling. The chain is Lateral signaling target protein 2 (lst-2) from Caenorhabditis elegans.